We begin with the raw amino-acid sequence, 615 residues long: Chaperone protein DnaK (615 aa).

T177 is subject to Phosphothreonine; by autocatalysis. Positions 567 to 615 are disordered; that stretch reads TKESQGIAMKAYQKAQEKQAQEKGTQENTTAKNEKPQDEVVDADFEEKK. The span at 581–591 shows a compositional bias: basic and acidic residues; that stretch reads AQEKQAQEKGT. Residues 605 to 615 show a composition bias toward acidic residues; it reads EVVDADFEEKK.

The protein belongs to the heat shock protein 70 family.

Acts as a chaperone. The chain is Chaperone protein DnaK from Onion yellows phytoplasma (strain OY-M).